The following is a 295-amino-acid chain: (R)-3-hydroxydecanoyl-ACP:CoA transacylase (295 aa).

The AB hydrolase-1 domain maps to 28-254 (NTIILINGSL…VIRDAGHFLD (227 aa)).

Its pathway is polyester biosynthesis; polyhydroxyalkanoate biosynthesis. Its function is as follows. Catalyzes the transfer of the acyl moiety from in vitro synthesized 3-hydroxydecanoyl-CoA to acyl carrier protein. This is (R)-3-hydroxydecanoyl-ACP:CoA transacylase (phaG) from Ectopseudomonas oleovorans (Pseudomonas oleovorans).